The sequence spans 373 residues: Protein phosphatase 1K, mitochondrial (373 aa).

One can recognise a PPM-type phosphatase domain in the interval Lys-95 to Phe-347. 3 residues coordinate Mg(2+): Asp-128, Gly-129, and Asp-338.

Belongs to the PP2C family. Requires Mg(2+) as cofactor. Mn(2+) serves as cofactor.

The protein localises to the mitochondrion matrix. It catalyses the reaction O-phospho-L-seryl-[protein] + H2O = L-seryl-[protein] + phosphate. The catalysed reaction is O-phospho-L-threonyl-[protein] + H2O = L-threonyl-[protein] + phosphate. The sequence is that of Protein phosphatase 1K, mitochondrial (ppm1k) from Xenopus laevis (African clawed frog).